A 205-amino-acid chain; its full sequence is Delta-aminolevulinic acid dehydratase (205 aa).

Zn(2+)-binding residues include Cys117, Cys119, and Cys127. Lys192 (schiff-base intermediate with substrate) is an active-site residue. Substrate is bound at residue Arg202.

Belongs to the ALAD family. As to quaternary structure, homooctamer. Zn(2+) is required as a cofactor.

The enzyme catalyses 2 5-aminolevulinate = porphobilinogen + 2 H2O + H(+). The protein operates within porphyrin-containing compound metabolism; protoporphyrin-IX biosynthesis; coproporphyrinogen-III from 5-aminolevulinate: step 1/4. Catalyzes an early step in the biosynthesis of tetrapyrroles. Binds two molecules of 5-aminolevulinate per subunit, each at a distinct site, and catalyzes their condensation to form porphobilinogen. This Ruminiclostridium josui (Clostridium josui) protein is Delta-aminolevulinic acid dehydratase (hemB).